We begin with the raw amino-acid sequence, 526 residues long: Glucose-6-phosphate isomerase (526 aa).

Residue glutamate 320 is the Proton donor of the active site. Active-site residues include histidine 349 and lysine 453.

This sequence belongs to the GPI family.

The protein localises to the cytoplasm. It carries out the reaction alpha-D-glucose 6-phosphate = beta-D-fructose 6-phosphate. It functions in the pathway carbohydrate biosynthesis; gluconeogenesis. The protein operates within carbohydrate degradation; glycolysis; D-glyceraldehyde 3-phosphate and glycerone phosphate from D-glucose: step 2/4. Functionally, catalyzes the reversible isomerization of glucose-6-phosphate to fructose-6-phosphate. In Gloeothece citriformis (strain PCC 7424) (Cyanothece sp. (strain PCC 7424)), this protein is Glucose-6-phosphate isomerase.